The chain runs to 165 residues: Small ribosomal subunit protein uS5 (165 aa).

One can recognise an S5 DRBM domain in the interval 13–76 (LEENVVSINR…EDAKRHLIKV (64 aa)).

This sequence belongs to the universal ribosomal protein uS5 family. As to quaternary structure, part of the 30S ribosomal subunit. Contacts proteins S4 and S8.

With S4 and S12 plays an important role in translational accuracy. Functionally, located at the back of the 30S subunit body where it stabilizes the conformation of the head with respect to the body. This chain is Small ribosomal subunit protein uS5, found in Oenococcus oeni (strain ATCC BAA-331 / PSU-1).